Reading from the N-terminus, the 447-residue chain is N-succinylarginine dihydrolase (447 aa).

Substrate is bound by residues 19–28, Asn110, and 137–138; these read AGLSFGNEAS and HR. Glu174 is a catalytic residue. Arg212 serves as a coordination point for substrate. His248 is an active-site residue. The substrate site is built by Asp250 and Asn359. The active-site Nucleophile is Cys365.

It belongs to the succinylarginine dihydrolase family. Homodimer.

The catalysed reaction is N(2)-succinyl-L-arginine + 2 H2O + 2 H(+) = N(2)-succinyl-L-ornithine + 2 NH4(+) + CO2. It participates in amino-acid degradation; L-arginine degradation via AST pathway; L-glutamate and succinate from L-arginine: step 2/5. In terms of biological role, catalyzes the hydrolysis of N(2)-succinylarginine into N(2)-succinylornithine, ammonia and CO(2). This chain is N-succinylarginine dihydrolase, found in Escherichia coli O6:H1 (strain CFT073 / ATCC 700928 / UPEC).